Reading from the N-terminus, the 63-residue chain is Small ribosomal subunit protein eS31 (63 aa).

Zn(2+)-binding residues include C31, C34, C50, and C53.

This sequence belongs to the eukaryotic ribosomal protein eS31 family. As to quaternary structure, part of the 30S ribosomal subunit. It depends on Zn(2+) as a cofactor.

This is Small ribosomal subunit protein eS31 (rps27ae) from Aeropyrum pernix (strain ATCC 700893 / DSM 11879 / JCM 9820 / NBRC 100138 / K1).